Consider the following 289-residue polypeptide: ATP synthase gamma chain (289 aa).

Belongs to the ATPase gamma chain family. F-type ATPases have 2 components, CF(1) - the catalytic core - and CF(0) - the membrane proton channel. CF(1) has five subunits: alpha(3), beta(3), gamma(1), delta(1), epsilon(1). CF(0) has three main subunits: a, b and c.

The protein localises to the cell inner membrane. Produces ATP from ADP in the presence of a proton gradient across the membrane. The gamma chain is believed to be important in regulating ATPase activity and the flow of protons through the CF(0) complex. The sequence is that of ATP synthase gamma chain from Pasteurella multocida (strain Pm70).